A 154-amino-acid polypeptide reads, in one-letter code: Myoglobin (154 aa).

The 147-residue stretch at 2 to 148 (GLSDGEWQSV…FRNDIAAKYK (147 aa)) folds into the Globin domain. Position 4 is a phosphoserine (serine 4). Histidine 65 serves as a coordination point for nitrite. Position 65 (histidine 65) interacts with O2. A Phosphothreonine modification is found at threonine 68. Histidine 94 lines the heme b pocket.

The protein belongs to the globin family. In terms of assembly, monomeric.

The protein resides in the cytoplasm. It localises to the sarcoplasm. It carries out the reaction Fe(III)-heme b-[protein] + nitric oxide + H2O = Fe(II)-heme b-[protein] + nitrite + 2 H(+). The enzyme catalyses H2O2 + AH2 = A + 2 H2O. In terms of biological role, monomeric heme protein which primary function is to store oxygen and facilitate its diffusion within muscle tissues. Reversibly binds oxygen through a pentacoordinated heme iron and enables its timely and efficient release as needed during periods of heightened demand. Depending on the oxidative conditions of tissues and cells, and in addition to its ability to bind oxygen, it also has a nitrite reductase activity whereby it regulates the production of bioactive nitric oxide. Under stress conditions, like hypoxia and anoxia, it also protects cells against reactive oxygen species thanks to its pseudoperoxidase activity. The polypeptide is Myoglobin (MB) (Nycticebus coucang (Slow loris)).